Here is a 336-residue protein sequence, read N- to C-terminus: Glucokinase (336 aa).

Residue 12–17 (ADIGGT) participates in ATP binding.

The protein belongs to the bacterial glucokinase family.

Its subcellular location is the cytoplasm. It catalyses the reaction D-glucose + ATP = D-glucose 6-phosphate + ADP + H(+). The chain is Glucokinase from Helicobacter pylori (strain ATCC 700392 / 26695) (Campylobacter pylori).